Reading from the N-terminus, the 198-residue chain is Acireductone dioxygenase (198 aa).

Fe(2+)-binding residues include His97, His99, Glu103, and His141. Residues His97, His99, Glu103, and His141 each contribute to the Ni(2+) site.

The protein belongs to the acireductone dioxygenase (ARD) family. In terms of assembly, monomer. Fe(2+) is required as a cofactor. It depends on Ni(2+) as a cofactor.

It carries out the reaction 1,2-dihydroxy-5-(methylsulfanyl)pent-1-en-3-one + O2 = 3-(methylsulfanyl)propanoate + CO + formate + 2 H(+). It catalyses the reaction 1,2-dihydroxy-5-(methylsulfanyl)pent-1-en-3-one + O2 = 4-methylsulfanyl-2-oxobutanoate + formate + 2 H(+). It participates in amino-acid biosynthesis; L-methionine biosynthesis via salvage pathway; L-methionine from S-methyl-5-thio-alpha-D-ribose 1-phosphate: step 5/6. In terms of biological role, catalyzes 2 different reactions between oxygen and the acireductone 1,2-dihydroxy-3-keto-5-methylthiopentene (DHK-MTPene) depending upon the metal bound in the active site. Fe-containing acireductone dioxygenase (Fe-ARD) produces formate and 2-keto-4-methylthiobutyrate (KMTB), the alpha-ketoacid precursor of methionine in the methionine recycle pathway. Ni-containing acireductone dioxygenase (Ni-ARD) produces methylthiopropionate, carbon monoxide and formate, and does not lie on the methionine recycle pathway. The chain is Acireductone dioxygenase from Synechococcus elongatus (strain ATCC 33912 / PCC 7942 / FACHB-805) (Anacystis nidulans R2).